The primary structure comprises 471 residues: Proline--tRNA ligase (471 aa).

It belongs to the class-II aminoacyl-tRNA synthetase family. ProS type 3 subfamily. Homodimer.

The protein resides in the cytoplasm. It carries out the reaction tRNA(Pro) + L-proline + ATP = L-prolyl-tRNA(Pro) + AMP + diphosphate. Functionally, catalyzes the attachment of proline to tRNA(Pro) in a two-step reaction: proline is first activated by ATP to form Pro-AMP and then transferred to the acceptor end of tRNA(Pro). The protein is Proline--tRNA ligase of Archaeoglobus fulgidus (strain ATCC 49558 / DSM 4304 / JCM 9628 / NBRC 100126 / VC-16).